We begin with the raw amino-acid sequence, 354 residues long: Glyceraldehyde-3-phosphate dehydrogenase (354 aa).

Residues 11 to 12 (TI) and Gly108 contribute to the NAD(+) site. Residue 137-139 (SCN) coordinates D-glyceraldehyde 3-phosphate. The Nucleophile role is filled by Cys138. Arg166 contributes to the NAD(+) binding site. 192-193 (HG) lines the D-glyceraldehyde 3-phosphate pocket. Residue Gln299 participates in NAD(+) binding.

Belongs to the glyceraldehyde-3-phosphate dehydrogenase family. Homotetramer.

It is found in the cytoplasm. The enzyme catalyses D-glyceraldehyde 3-phosphate + phosphate + NADP(+) = (2R)-3-phospho-glyceroyl phosphate + NADPH + H(+). It carries out the reaction D-glyceraldehyde 3-phosphate + phosphate + NAD(+) = (2R)-3-phospho-glyceroyl phosphate + NADH + H(+). Its pathway is carbohydrate degradation; glycolysis; pyruvate from D-glyceraldehyde 3-phosphate: step 1/5. The chain is Glyceraldehyde-3-phosphate dehydrogenase from Haloarcula marismortui (strain ATCC 43049 / DSM 3752 / JCM 8966 / VKM B-1809) (Halobacterium marismortui).